The following is a 304-amino-acid chain: N-acetylmuramic acid 6-phosphate etherase (304 aa).

Positions 62–225 constitute an SIS domain; sequence IVQAFQNGGR…TTASMVMIGK (164 aa). The Proton donor role is filled by Glu-90. The active site involves Glu-121.

This sequence belongs to the GCKR-like family. MurNAc-6-P etherase subfamily. Homodimer.

It carries out the reaction N-acetyl-D-muramate 6-phosphate + H2O = N-acetyl-D-glucosamine 6-phosphate + (R)-lactate. The protein operates within amino-sugar metabolism; 1,6-anhydro-N-acetylmuramate degradation. It functions in the pathway amino-sugar metabolism; N-acetylmuramate degradation. It participates in cell wall biogenesis; peptidoglycan recycling. Its function is as follows. Specifically catalyzes the cleavage of the D-lactyl ether substituent of MurNAc 6-phosphate, producing GlcNAc 6-phosphate and D-lactate. Together with AnmK, is also required for the utilization of anhydro-N-acetylmuramic acid (anhMurNAc) either imported from the medium or derived from its own cell wall murein, and thus plays a role in cell wall recycling. The chain is N-acetylmuramic acid 6-phosphate etherase from Actinobacillus pleuropneumoniae serotype 5b (strain L20).